Consider the following 464-residue polypeptide: Serine protease PepD (464 aa).

A disordered region spans residues 1-71; sequence MAKLARVVGL…TQYRQPYEAL (71 aa). Residues 1-100 are Cytoplasmic-facing; that stretch reads MAKLARVVGL…GMVRQRPRAG (100 aa). Positions 39–48 are enriched in low complexity; sequence QGQQQTYSQQ. Residues 101–121 traverse the membrane as a helical segment; it reads MLAIGAVTIAVVSAGIGGAAA. Topologically, residues 122 to 464 are periplasmic; the sequence is SLVGFNRAPA…VQVTLGKAEQ (343 aa). Active-site charge relay system residues include H197, D236, and S317. Residues 368-449 form the PDZ domain; sequence LISTGKASHA…TVALTFQDPS (82 aa).

It belongs to the peptidase S1C family. In terms of assembly, homotrimer. Interacts with numerous proteins, including the 35 kDa antigen PspA.

The protein localises to the cell inner membrane. Its subcellular location is the secreted. It localises to the cell wall. The enzyme catalyses Acts on substrates that are at least partially unfolded. The cleavage site P1 residue is normally between a pair of hydrophobic residues, such as Val-|-Val.. With respect to regulation, probably regulates its own activity by autocleavage, which removes the PDZ domain. Inhibited by the serine protease inhibitor diisopropylfluorophosphate (DFP). Inhibited by fluoroquinolone such as ciprofloxacin, moxifloxacin and ofloxacin and their analogs. Functionally, required for virulence. Acts both as a protease, which degrades and/or refolds damaged substrate targets, and as a chaperone. Plays an important role in the stress response network mediated through the two-component regulatory system MprAB and SigE signaling networks. May utilize its PDZ domain to recognize and process misfolded proteins at the cell membrane, leading to activation of the MprAB and SigE signaling pathways and subsequent establishment of a positive feedback loop that facilitates bacterial adaptation. Interacts with and potentially cleaves several proteins, including the 35 kDa antigen PspA. Proteolytic cleavage of PspA may help to maintain cell envelope homeostasis in Mycobacterium and regulate specific stress response pathways during periods of extracytoplasmic stress. In vitro, exhibits proteolytic activity against the artificial substrate beta-casein. This chain is Serine protease PepD, found in Mycobacterium tuberculosis (strain ATCC 25618 / H37Rv).